The primary structure comprises 725 residues: Catalase-peroxidase (725 aa).

The segment at residues 98–226 (WHMAGSYRTS…LAAVQMGLIY (129 aa)) is a cross-link (tryptophyl-tyrosyl-methioninium (Trp-Tyr) (with M-252)). His99 acts as the Proton acceptor in catalysis. A cross-link (tryptophyl-tyrosyl-methioninium (Tyr-Met) (with W-98)) is located at residues 226 to 252 (YVNPEGVNGKSDPQATAYQMRETFARM). Heme b is bound at residue His267.

It belongs to the peroxidase family. Peroxidase/catalase subfamily. In terms of assembly, homodimer or homotetramer. It depends on heme b as a cofactor. Post-translationally, formation of the three residue Trp-Tyr-Met cross-link is important for the catalase, but not the peroxidase activity of the enzyme.

The enzyme catalyses H2O2 + AH2 = A + 2 H2O. It carries out the reaction 2 H2O2 = O2 + 2 H2O. Bifunctional enzyme with both catalase and broad-spectrum peroxidase activity. The protein is Catalase-peroxidase of Paracoccus denitrificans (strain Pd 1222).